The primary structure comprises 139 residues: Large ribosomal subunit protein uL16 (139 aa).

The span at 1-20 shows a compositional bias: basic residues; it reads MLMPRRVKHRKQHHPTRRGA. The tract at residues 1–24 is disordered; sequence MLMPRRVKHRKQHHPTRRGAAKGG.

Belongs to the universal ribosomal protein uL16 family. In terms of assembly, part of the 50S ribosomal subunit.

Binds 23S rRNA and is also seen to make contacts with the A and possibly P site tRNAs. This chain is Large ribosomal subunit protein uL16, found in Nocardioides sp. (strain ATCC BAA-499 / JS614).